The primary structure comprises 154 residues: Transcriptional repressor NrdR (154 aa).

The segment at 3-34 is a zinc-finger region; sequence CPTCKYNGTRVVDSRPADDGNSIRRRRECEKC. One can recognise an ATP-cone domain in the interval 49 to 139; that stretch reads LIVVKKDGAR…VYRQFKDISV (91 aa).

The protein belongs to the NrdR family. The cofactor is Zn(2+).

In terms of biological role, negatively regulates transcription of bacterial ribonucleotide reductase nrd genes and operons by binding to NrdR-boxes. The sequence is that of Transcriptional repressor NrdR from Listeria innocua serovar 6a (strain ATCC BAA-680 / CLIP 11262).